Reading from the N-terminus, the 152-residue chain is UPF0225 protein KPK_2103 (152 aa).

Belongs to the UPF0225 family.

This chain is UPF0225 protein KPK_2103, found in Klebsiella pneumoniae (strain 342).